Reading from the N-terminus, the 203-residue chain is MGTWILFACLVGAAFAMPLPPHPGHPGYINFSYENSHSQAINVDRIALVLTPLKWYQSMIRPPYSSYGYEPMGGWLHHQIIPVVSQQHPLTHTLQSHHHIPVVPAQQPRVPQQAMMPVPGQQSMTPTQHHQPNLPLPAQQPFQPQPVQPLPHQPMQPQPPVQPMQPLLPQPPLPPMFPMRPLPPILPDLHLEAWPATDKTKRE.

The N-terminal stretch at 1-16 (MGTWILFACLVGAAFA) is a signal peptide. The interval 116–180 (MPVPGQQSMT…PPLPPMFPMR (65 aa)) is disordered. A compositionally biased stretch (polar residues) spans 120–130 (GQQSMTPTQHH). The segment covering 131 to 142 (QPNLPLPAQQPF) has biased composition (low complexity). Residues 143-180 (QPQPVQPLPHQPMQPQPPVQPMQPLLPQPPLPPMFPMR) show a composition bias toward pro residues.

It belongs to the amelogenin family.

It is found in the secreted. Its subcellular location is the extracellular space. The protein resides in the extracellular matrix. Functionally, plays a role in biomineralization. Seems to regulate the formation of crystallites during the secretory stage of tooth enamel development. Thought to play a major role in the structural organization and mineralization of developing enamel. This chain is Amelogenin, Y isoform (AMELY), found in Pan troglodytes (Chimpanzee).